A 231-amino-acid polypeptide reads, in one-letter code: Potassium/proton antiporter CemA (231 aa).

The next 3 helical transmembrane spans lie at 9 to 29 (FIPLLYLTSIVFLPWWVSFLF), 116 to 136 (IICFIILSGYSILSNEELIIL), and 191 to 211 (IISGLVSTFPVILDTIFKYWI).

The protein belongs to the CemA family.

It is found in the plastid. The protein resides in the chloroplast inner membrane. The catalysed reaction is K(+)(in) + H(+)(out) = K(+)(out) + H(+)(in). Its function is as follows. Contributes to K(+)/H(+) antiport activity by supporting proton efflux to control proton extrusion and homeostasis in chloroplasts in a light-dependent manner to modulate photosynthesis. Prevents excessive induction of non-photochemical quenching (NPQ) under continuous-light conditions. Indirectly promotes efficient inorganic carbon uptake into chloroplasts. In Manihot esculenta (Cassava), this protein is Potassium/proton antiporter CemA.